The sequence spans 851 residues: MRVKEKYQHLWRWGWRWGTMLLGMLMICSATEKLWVTVYFGVPVWKEATTTLFCASDAKAYDTEVHNVWATHACVPTDPNPQEVVLVNVTENFNMWKNDMVEQMHEDIISLWDQSLKPCVKLTPLCVSLKCTDLKNDTNTNSSSGRMIMEKGEIKNCSFNISTSKRGKVQKEYAFFYKLDIIPIDNDTTSYTLTSCNTSVITQACPKVSFEPIPIHYCAPAGFAILKCNNKTFNGTGPCTNVSTVQCTHGIRPVVSTQLLLNGSLAEEEVVIRSVNFTDNAKTIIVQLDTSVEINCTRPNNNTRKKIRIQRGPGRAFVTIGKIGNMRQAHCNISRAKWNATLKQIDSKLREQFGNNKTIIFKQSSGGDPEIVTHSFNCGGEFFYCNSTQLFNSTWSTKGSNNTEGSDTITLPCRIKQIINMWQEVGKAMYAPPISGQIRCSSNITGLLLTRDGGNSNNESEIFRPGGGDMRDNWRSELYKYKVVKIEPLGVAPTKAKRRVVQREKRAVGIGALFLGFLGAAGSTMGAASMTLTVQARQLLSGIVQQQNNLLRAIEGQQHLLQLTVWGIKQLQARILAVERYLKDQQLLGIWGCSGKLICTTAVPWNASWSNKSLEQIWNNMTWMEWDREINNYTSLIHSLIEESQNQQEKNEQELLELDKWASLWNWFNITNWLWYIKLFIMIVGGLVGLRIVFAVLSIVNRVRQGYSPLSFQTHLPNPRGPDRPEGIEEEGGERDRDRSIRLVNGSLALIWDDLRSLCLFSYHRLRDLLLIVTRIVELLGRRGWEALKYWWNLLQYWSQELKNSAVNLLNATAIAVAEGTDRVIELVQAAYRAIRHIPRRIRQGLERILL.

An N-terminal signal peptide occupies residues 1-32 (MRVKEKYQHLWRWGWRWGTMLLGMLMICSATE). Residues 33-679 (KLWVTVYFGV…ITNWLWYIKL (647 aa)) lie on the Extracellular side of the membrane. C54 and C74 are disulfide-bonded. N88, N136, N141, N156, N160, N186, N197, N230, N234, N241, N262, N276, N295, N301, N332, N339, and N356 each carry an N-linked (GlcNAc...) asparagine; by host glycan. Intrachain disulfides connect C119–C205, C126–C196, C131–C157, C218–C247, and C228–C239. Positions 131-156 (CTDLKNDTNTNSSSGRMIMEKGEIKN) are V1. The segment at 157 to 196 (CSFNISTSKRGKVQKEYAFFYKLDIIPIDNDTTSYTLTSC) is V2. The tract at residues 296 to 330 (CTRPNNNTRKKIRIQRGPGRAFVTIGKIGNMRQAH) is V3. An intrachain disulfide couples C296 to C331. The segment at 364–374 (SSGGDPEIVTH) is CD4-binding loop. Intrachain disulfides connect C378-C440 and C385-C413. The segment at 385–413 (CNSTQLFNSTWSTKGSNNTEGSDTITLPC) is V4. 5 N-linked (GlcNAc...) asparagine; by host glycosylation sites follow: N386, N392, N401, N443, and N458. 2 V5 regions span residues 456 to 466 (SNNESEIFRPG) and 458 to 466 (NESEIFRPG). Residues 507–527 (AVGIGALFLGFLGAAGSTMGA) are fusion peptide. An immunosuppression region spans residues 569 to 587 (KQLQARILAVERYLKDQQL). A disulfide bridge connects residues C593 and C599. N-linked (GlcNAc...) asparagine; by host glycans are attached at residues N606, N611, N620, N632, and N669. The stretch at 628 to 662 (REINNYTSLIHSLIEESQNQQEKNEQELLELDKWA) forms a coiled coil. Residues 657–678 (ELDKWASLWNWFNITNWLWYIK) form an MPER; binding to GalCer region. A helical transmembrane segment spans residues 680–700 (FIMIVGGLVGLRIVFAVLSIV). The Cytoplasmic segment spans residues 701 to 851 (NRVRQGYSPL…IRQGLERILL (151 aa)). Residues 707 to 710 (YSPL) carry the YXXL motif; contains endocytosis signal motif. The tract at residues 713 to 735 (QTHLPNPRGPDRPEGIEEEGGER) is disordered. The S-palmitoyl cysteine; by host moiety is linked to residue C759. The Di-leucine internalization motif motif lies at 850–851 (LL).

It belongs to the HIV-1 env protein family. In terms of assembly, the mature envelope protein (Env) consists of a homotrimer of non-covalently associated gp120-gp41 heterodimers. The resulting complex protrudes from the virus surface as a spike. There seems to be as few as 10 spikes on the average virion. Interacts with host CD4, CCR5 and CXCR4. Gp120 also interacts with the C-type lectins CD209/DC-SIGN and CLEC4M/DC-SIGNR (collectively referred to as DC-SIGN(R)). Gp120 and gp41 interact with GalCer. Gp120 interacts with host ITGA4/ITGB7 complex; on CD4+ T-cells, this interaction results in rapid activation of integrin ITGAL/LFA-1, which facilitates efficient cell-to-cell spreading of HIV-1. Gp120 interacts with cell-associated heparan sulfate; this interaction increases virus infectivity on permissive cells and may be involved in infection of CD4- cells. The mature envelope protein (Env) consists of a homotrimer of non-covalently associated gp120-gp41 heterodimers. The resulting complex protrudes from the virus surface as a spike. There seems to be as few as 10 spikes on the average virion. In terms of processing, highly glycosylated by host. The high number of glycan on the protein is reffered to as 'glycan shield' because it contributes to hide protein sequence from adaptive immune system. Post-translationally, palmitoylation of the transmembrane protein and of Env polyprotein (prior to its proteolytic cleavage) is essential for their association with host cell membrane lipid rafts. Palmitoylation is therefore required for envelope trafficking to classical lipid rafts, but not for viral replication. Specific enzymatic cleavages in vivo yield mature proteins. Envelope glycoproteins are synthesized as an inactive precursor that is heavily N-glycosylated and processed likely by host cell furin in the Golgi to yield the mature SU and TM proteins. The cleavage site between SU and TM requires the minimal sequence [KR]-X-[KR]-R. About 2 of the 9 disulfide bonds of gp41 are reduced by P4HB/PDI, following binding to CD4 receptor.

It is found in the virion membrane. Its subcellular location is the host cell membrane. The protein resides in the host endosome membrane. Its function is as follows. Oligomerizes in the host endoplasmic reticulum into predominantly trimers. In a second time, gp160 transits in the host Golgi, where glycosylation is completed. The precursor is then proteolytically cleaved in the trans-Golgi and thereby activated by cellular furin or furin-like proteases to produce gp120 and gp41. Attaches the virus to the host lymphoid cell by binding to the primary receptor CD4. This interaction induces a structural rearrangement creating a high affinity binding site for a chemokine coreceptor like CXCR4 and/or CCR5. Acts as a ligand for CD209/DC-SIGN and CLEC4M/DC-SIGNR, which are respectively found on dendritic cells (DCs), and on endothelial cells of liver sinusoids and lymph node sinuses. These interactions allow capture of viral particles at mucosal surfaces by these cells and subsequent transmission to permissive cells. HIV subverts the migration properties of dendritic cells to gain access to CD4+ T-cells in lymph nodes. Virus transmission to permissive T-cells occurs either in trans (without DCs infection, through viral capture and transmission), or in cis (following DCs productive infection, through the usual CD4-gp120 interaction), thereby inducing a robust infection. In trans infection, bound virions remain infectious over days and it is proposed that they are not degraded, but protected in non-lysosomal acidic organelles within the DCs close to the cell membrane thus contributing to the viral infectious potential during DCs' migration from the periphery to the lymphoid tissues. On arrival at lymphoid tissues, intact virions recycle back to DCs' cell surface allowing virus transmission to CD4+ T-cells. In terms of biological role, acts as a class I viral fusion protein. Under the current model, the protein has at least 3 conformational states: pre-fusion native state, pre-hairpin intermediate state, and post-fusion hairpin state. During fusion of viral and target intracellular membranes, the coiled coil regions (heptad repeats) assume a trimer-of-hairpins structure, positioning the fusion peptide in close proximity to the C-terminal region of the ectodomain. The formation of this structure appears to drive apposition and subsequent fusion of viral and target cell membranes. Complete fusion occurs in host cell endosomes and is dynamin-dependent, however some lipid transfer might occur at the plasma membrane. The virus undergoes clathrin-dependent internalization long before endosomal fusion, thus minimizing the surface exposure of conserved viral epitopes during fusion and reducing the efficacy of inhibitors targeting these epitopes. Membranes fusion leads to delivery of the nucleocapsid into the cytoplasm. The polypeptide is Envelope glycoprotein gp160 (Homo sapiens (Human)).